Consider the following 2200-residue polypeptide: Bromodomain and WD repeat-containing DDB_G0285837 (2200 aa).

Disordered stretches follow at residues 137 to 178, 194 to 245, and 259 to 288; these read GFND…SNTN, VTPT…TTPP, and DIQQ…NNNN. 3 stretches are compositionally biased toward low complexity: residues 161 to 176, 203 to 242, and 259 to 273; these read NNNN…SNSN, NTTN…TTLT, and DIQQ…QQQQ. 8 WD repeats span residues 352-391, 394-433, 442-483, 548-586, 591-630, 653-691, 694-736, and 741-780; these read GHKA…LIAT, GHLG…YDSI, SVNN…HVIS, GKTN…PKLV, GHPT…KWDH, RSKA…FHLE, EHTS…KKFV, and GFQC…DINN. Composition is skewed to acidic residues over residues 918-933 and 955-968; these read DDEI…EDFN and QDDD…EDYD. Disordered regions lie at residues 918 to 1180, 1262 to 1297, 1461 to 1538, and 1662 to 1703; these read DDEI…NHLT, NNNN…DDDD, ENNQ…NNNN, and NFNS…NNNN. Residues 974–1000 show a composition bias toward basic residues; the sequence is MSTRKKSKIKADKRKKRLLKQSKKFTR. Over residues 1052–1074 the composition is skewed to acidic residues; sequence GEIEMDDDDQYLNDNILDSDDND. Over residues 1109–1132 the composition is skewed to low complexity; it reads SSDNSSENDSSANGSDSDYSGSKS. Basic residues predominate over residues 1133–1164; sequence NKNKRGDKSKRNKKGKKNVKNKKVQKRGRKKS. Low complexity-rich tracts occupy residues 1262–1292 and 1461–1525; these read NNNN…QQIN and ENNQ…NSLN. The region spanning 1722–1823 is the Bromo domain; the sequence is EKIENLKKEM…HRISDILKEA (102 aa). Positions 1850–2200 are disordered; that stretch reads DKDDSQLDDE…RGRGRPPKSN (351 aa). Over residues 1878–1888 the composition is skewed to low complexity; that stretch reads LANNNHGNNKS. Residues 1910–1920 show a composition bias toward polar residues; it reads TGKNITRSLLS. Residues 1945–1958 are compositionally biased toward low complexity; that stretch reads TTTTTTTTTTTSST. 3 stretches are compositionally biased toward acidic residues: residues 2016 to 2028, 2057 to 2073, and 2104 to 2113; these read DYND…DNDG, EDED…EEDY, and SEEEEDEDQS. Residues 2114–2124 show a composition bias toward low complexity; sequence DVNSNNNSDNE. The segment covering 2125–2138 has biased composition (acidic residues); that stretch reads SGGEDGYSGEDGSE. A compositionally biased stretch (low complexity) spans 2170-2185; sequence SFKNNNNNNNINNNVN. Positions 2190–2200 are enriched in basic residues; that stretch reads KRGRGRPPKSN.

The chain is Bromodomain and WD repeat-containing DDB_G0285837 from Dictyostelium discoideum (Social amoeba).